The following is a 341-amino-acid chain: Queuosine 5'-phosphate N-glycosylase/hydrolase (341 aa).

N-acetylmethionine is present on Met1. Queuine contacts are provided by His53, Phe237, Asp239, Asp314, Tyr315, and Asp319. The active-site Nucleophile or transition state stabilizer is Asp239.

The protein belongs to the QNG1 protein family.

It catalyses the reaction queuosine 5'-phosphate + H2O = queuine + D-ribose 5-phosphate. In terms of biological role, catalyzes the hydrolysis of queuosine 5'-phosphate, releasing the nucleobase queuine (q). Is required for salvage of queuine from exogenous queuosine (Q) that is imported and then converted to queuosine 5'-phosphate intracellularly. The sequence is that of Queuosine 5'-phosphate N-glycosylase/hydrolase from Bos taurus (Bovine).